The chain runs to 294 residues: 4-hydroxy-tetrahydrodipicolinate synthase (294 aa).

Thr45 is a pyruvate binding site. The Proton donor/acceptor role is filled by Tyr133. The active-site Schiff-base intermediate with substrate is Lys161. Ile203 lines the pyruvate pocket.

This sequence belongs to the DapA family. Homotetramer; dimer of dimers.

The protein resides in the cytoplasm. It carries out the reaction L-aspartate 4-semialdehyde + pyruvate = (2S,4S)-4-hydroxy-2,3,4,5-tetrahydrodipicolinate + H2O + H(+). It functions in the pathway amino-acid biosynthesis; L-lysine biosynthesis via DAP pathway; (S)-tetrahydrodipicolinate from L-aspartate: step 3/4. Its function is as follows. Catalyzes the condensation of (S)-aspartate-beta-semialdehyde [(S)-ASA] and pyruvate to 4-hydroxy-tetrahydrodipicolinate (HTPA). The sequence is that of 4-hydroxy-tetrahydrodipicolinate synthase from Buchnera aphidicola subsp. Acyrthosiphon pisum (strain APS) (Acyrthosiphon pisum symbiotic bacterium).